The sequence spans 259 residues: Type III pantothenate kinase (259 aa).

9–16 lines the ATP pocket; the sequence is DAGNSRIK. Substrate is bound by residues Y93 and 100–103; that span reads GSDR. D102 (proton acceptor) is an active-site residue. T126 serves as a coordination point for ATP. T190 serves as a coordination point for substrate.

This sequence belongs to the type III pantothenate kinase family. Homodimer. Requires NH4(+) as cofactor. It depends on K(+) as a cofactor.

Its subcellular location is the cytoplasm. The enzyme catalyses (R)-pantothenate + ATP = (R)-4'-phosphopantothenate + ADP + H(+). The protein operates within cofactor biosynthesis; coenzyme A biosynthesis; CoA from (R)-pantothenate: step 1/5. Catalyzes the phosphorylation of pantothenate (Pan), the first step in CoA biosynthesis. The sequence is that of Type III pantothenate kinase from Burkholderia thailandensis (strain ATCC 700388 / DSM 13276 / CCUG 48851 / CIP 106301 / E264).